The sequence spans 219 residues: Ribose-5-phosphate isomerase A (219 aa).

Substrate contacts are provided by residues 28-31 (SGST), 81-84 (DGAD), and 94-97 (KGGG). Glu103 (proton acceptor) is an active-site residue. Lys121 serves as a coordination point for substrate.

It belongs to the ribose 5-phosphate isomerase family. As to quaternary structure, homodimer.

It carries out the reaction aldehydo-D-ribose 5-phosphate = D-ribulose 5-phosphate. The protein operates within carbohydrate degradation; pentose phosphate pathway; D-ribose 5-phosphate from D-ribulose 5-phosphate (non-oxidative stage): step 1/1. Functionally, catalyzes the reversible conversion of ribose-5-phosphate to ribulose 5-phosphate. This Histophilus somni (strain 2336) (Haemophilus somnus) protein is Ribose-5-phosphate isomerase A.